The sequence spans 170 residues: Acireductone dioxygenase (170 aa).

Fe(2+) contacts are provided by His-99, His-101, Glu-105, and His-144. Residues His-99, His-101, Glu-105, and His-144 each contribute to the Ni(2+) site.

Belongs to the acireductone dioxygenase (ARD) family. As to quaternary structure, monomer. The cofactor is Fe(2+). Ni(2+) is required as a cofactor.

It carries out the reaction 1,2-dihydroxy-5-(methylsulfanyl)pent-1-en-3-one + O2 = 3-(methylsulfanyl)propanoate + CO + formate + 2 H(+). The enzyme catalyses 1,2-dihydroxy-5-(methylsulfanyl)pent-1-en-3-one + O2 = 4-methylsulfanyl-2-oxobutanoate + formate + 2 H(+). The protein operates within amino-acid biosynthesis; L-methionine biosynthesis via salvage pathway; L-methionine from S-methyl-5-thio-alpha-D-ribose 1-phosphate: step 5/6. Its function is as follows. Catalyzes 2 different reactions between oxygen and the acireductone 1,2-dihydroxy-3-keto-5-methylthiopentene (DHK-MTPene) depending upon the metal bound in the active site. Fe-containing acireductone dioxygenase (Fe-ARD) produces formate and 2-keto-4-methylthiobutyrate (KMTB), the alpha-ketoacid precursor of methionine in the methionine recycle pathway. Ni-containing acireductone dioxygenase (Ni-ARD) produces methylthiopropionate, carbon monoxide and formate, and does not lie on the methionine recycle pathway. This Bacillus thuringiensis (strain Al Hakam) protein is Acireductone dioxygenase.